Reading from the N-terminus, the 298-residue chain is Mitochondrial dicarboxylate transporter (298 aa).

Solcar repeat units lie at residues 11 to 95 (KNIK…LKEN), 103 to 195 (TNMA…FKNY), and 205 to 289 (SKNY…LKKH). The next 6 helical transmembrane spans lie at 17 to 37 (WWYG…LDLA), 58 to 76 (ILAN…AAVL), 105 to 126 (MAYL…GNFA), 170 to 189 (GWKP…VVTY), 211 to 231 (LTAS…ADVM), and 265 to 283 (WLPS…FFAI).

This sequence belongs to the mitochondrial carrier (TC 2.A.29) family. Homodimer. Binds to the TIM22 translocation complex during import.

The protein resides in the mitochondrion inner membrane. In terms of biological role, mitochondrial dicarboxylic transporter catalyzing the exchange of dicarboxylic acids like malate and succinate for inorganic phosphate. Required for growth on ethanol and acetate. The chain is Mitochondrial dicarboxylate transporter (DIC1) from Saccharomyces cerevisiae (strain ATCC 204508 / S288c) (Baker's yeast).